A 510-amino-acid polypeptide reads, in one-letter code: GMP synthase [glutamine-hydrolyzing] (510 aa).

The 191-residue stretch at 5–195 folds into the Glutamine amidotransferase type-1 domain; that stretch reads LVLVVDFGGQ…LFNVCNLKGD (191 aa). The Nucleophile role is filled by cysteine 82. Catalysis depends on residues histidine 169 and glutamate 171. The 190-residue stretch at 196–385 folds into the GMPS ATP-PPase domain; the sequence is WSMSSFAEQQ…LGIPHKLVWR (190 aa). 223-229 contributes to the ATP binding site; that stretch reads SGGVDSS.

Homodimer.

It carries out the reaction XMP + L-glutamine + ATP + H2O = GMP + L-glutamate + AMP + diphosphate + 2 H(+). It functions in the pathway purine metabolism; GMP biosynthesis; GMP from XMP (L-Gln route): step 1/1. Its function is as follows. Catalyzes the synthesis of GMP from XMP. In Clostridium botulinum (strain Loch Maree / Type A3), this protein is GMP synthase [glutamine-hydrolyzing].